The primary structure comprises 194 residues: CASP-like protein 1D1 (194 aa).

A compositionally biased stretch (basic and acidic residues) spans 1–16 (MGSDETKSTLDTERST). The segment at 1-23 (MGSDETKSTLDTERSTVPRTGTT) is disordered. At 1–31 (MGSDETKSTLDTERSTVPRTGTTTKSCSITQ) the chain is on the cytoplasmic side. The chain crosses the membrane as a helical span at residues 32–52 (VVLRFVLFAATLTSIVVMVTS). The Extracellular portion of the chain corresponds to 53-77 (KQTKNIFIPGTPIRIPAAKFTNSPA). Residues 78–98 (LIYFVVALSVACFYSIVSTFV) form a helical membrane-spanning segment. The Cytoplasmic portion of the chain corresponds to 99–109 (TVSAFKKHSCS). Residues 110 to 130 (AILLLNLAIMDAVMVGIVASA) traverse the membrane as a helical segment. Residues 131–163 (TGAGGGVAYLGLKGNKEVRWGKICNIYDKFCRH) are Extracellular-facing. A helical transmembrane segment spans residues 164-184 (VGGAIAVSLFASVILLLLSII). The Cytoplasmic portion of the chain corresponds to 185 to 194 (SVLSLYKKIR).

This sequence belongs to the Casparian strip membrane proteins (CASP) family. In terms of assembly, homodimer and heterodimers.

It localises to the cell membrane. The protein is CASP-like protein 1D1 of Arabidopsis lyrata subsp. lyrata (Lyre-leaved rock-cress).